The primary structure comprises 384 residues: Anhydro-N-acetylmuramic acid kinase (384 aa).

Position 9–16 (Gly9–Asp16) interacts with ATP.

Belongs to the anhydro-N-acetylmuramic acid kinase family.

The enzyme catalyses 1,6-anhydro-N-acetyl-beta-muramate + ATP + H2O = N-acetyl-D-muramate 6-phosphate + ADP + H(+). Its pathway is amino-sugar metabolism; 1,6-anhydro-N-acetylmuramate degradation. It functions in the pathway cell wall biogenesis; peptidoglycan recycling. Functionally, catalyzes the specific phosphorylation of 1,6-anhydro-N-acetylmuramic acid (anhMurNAc) with the simultaneous cleavage of the 1,6-anhydro ring, generating MurNAc-6-P. Is required for the utilization of anhMurNAc either imported from the medium or derived from its own cell wall murein, and thus plays a role in cell wall recycling. This is Anhydro-N-acetylmuramic acid kinase from Synechococcus sp. (strain CC9311).